The chain runs to 390 residues: Chorismate synthase (390 aa).

2 residues coordinate NADP(+): Arg-48 and Arg-54. Residues 132–134, 244–245, Gly-289, 304–308, and Arg-330 contribute to the FMN site; these read RSS, NA, and KPTSS. The disordered stretch occupies residues 362 to 390; that stretch reads VGAHPAGAHPAGADPAGTHPGGPGGFQPG. Residues 363–379 show a composition bias toward low complexity; sequence GAHPAGAHPAGADPAGT. Residues 380-390 are compositionally biased toward gly residues; the sequence is HPGGPGGFQPG.

It belongs to the chorismate synthase family. Homotetramer. It depends on FMNH2 as a cofactor.

It catalyses the reaction 5-O-(1-carboxyvinyl)-3-phosphoshikimate = chorismate + phosphate. Its pathway is metabolic intermediate biosynthesis; chorismate biosynthesis; chorismate from D-erythrose 4-phosphate and phosphoenolpyruvate: step 7/7. Functionally, catalyzes the anti-1,4-elimination of the C-3 phosphate and the C-6 proR hydrogen from 5-enolpyruvylshikimate-3-phosphate (EPSP) to yield chorismate, which is the branch point compound that serves as the starting substrate for the three terminal pathways of aromatic amino acid biosynthesis. This reaction introduces a second double bond into the aromatic ring system. In Methylobacterium sp. (strain 4-46), this protein is Chorismate synthase.